A 125-amino-acid polypeptide reads, in one-letter code: Large ribosomal subunit protein bL12 (125 aa).

The protein belongs to the bacterial ribosomal protein bL12 family. As to quaternary structure, homodimer. Part of the ribosomal stalk of the 50S ribosomal subunit. Forms a multimeric L10(L12)X complex, where L10 forms an elongated spine to which 2 to 4 L12 dimers bind in a sequential fashion. Binds GTP-bound translation factors.

In terms of biological role, forms part of the ribosomal stalk which helps the ribosome interact with GTP-bound translation factors. Is thus essential for accurate translation. The protein is Large ribosomal subunit protein bL12 of Parabacteroides distasonis (strain ATCC 8503 / DSM 20701 / CIP 104284 / JCM 5825 / NCTC 11152).